Reading from the N-terminus, the 388-residue chain is NADH-quinone oxidoreductase subunit D 2 (388 aa).

Belongs to the complex I 49 kDa subunit family. In terms of assembly, NDH-1 is composed of 14 different subunits. Subunits NuoB, C, D, E, F, and G constitute the peripheral sector of the complex.

The protein localises to the cell membrane. It catalyses the reaction a quinone + NADH + 5 H(+)(in) = a quinol + NAD(+) + 4 H(+)(out). Functionally, NDH-1 shuttles electrons from NADH, via FMN and iron-sulfur (Fe-S) centers, to quinones in the respiratory chain. The immediate electron acceptor for the enzyme in this species is believed to be a menaquinone. Couples the redox reaction to proton translocation (for every two electrons transferred, four hydrogen ions are translocated across the cytoplasmic membrane), and thus conserves the redox energy in a proton gradient. This chain is NADH-quinone oxidoreductase subunit D 2, found in Salinispora tropica (strain ATCC BAA-916 / DSM 44818 / JCM 13857 / NBRC 105044 / CNB-440).